The chain runs to 479 residues: PTS system glucose-specific EIICB component (479 aa).

The region spanning 1-388 is the PTS EIIC type-1 domain; it reads MFKNAFSNLQ…FNLKTPGREK (388 aa). 9 helical membrane-spanning segments follow: residues 15–35, 51–71, 80–100, 112–132, 152–172, 252–272, 280–300, 305–325, and 356–376; these read SLMLPVSVLPIAGILLGIGSA, AGSSVFSNMPLIFAIGIALGF, LAAVVSYGIMTKTLSITIPIF, YLLDTGILGGIIAGSISAYIF, FVPIASGLISIIFGCILSIIW, GGFIFKMYGLPFAALAMWHCA, IGGIMMSGALTAILTGITEPI, ILVAPILYVIHAILAGLAFPI, and LFPIVGLFYGILYYGIFYFMI. The 81-residue stretch at 399–479 folds into the PTS EIIB type-1 domain; that stretch reads KETALLVISI…IDNYMSNTNQ (81 aa). C421 serves as the catalytic Phosphocysteine intermediate; for EIIB activity. Residue C421 is modified to Phosphocysteine.

Its subcellular location is the cell inner membrane. It catalyses the reaction N(pros)-phospho-L-histidyl-[protein] + D-glucose(out) = D-glucose 6-phosphate(in) + L-histidyl-[protein]. Its function is as follows. The phosphoenolpyruvate-dependent sugar phosphotransferase system (sugar PTS), a major carbohydrate active transport system, catalyzes the phosphorylation of incoming sugar substrates concomitantly with their translocation across the cell membrane. The enzyme II complex composed of PtsG and Crr is involved in glucose transport. The polypeptide is PTS system glucose-specific EIICB component (ptsG) (Buchnera aphidicola subsp. Baizongia pistaciae (strain Bp)).